The following is a 382-amino-acid chain: S-adenosylmethionine synthase (382 aa).

Residue H16 participates in ATP binding. D18 contributes to the Mg(2+) binding site. A K(+)-binding site is contributed by E44. L-methionine is bound by residues E57 and Q100. Positions 100-110 are flexible loop; sequence QSADIAMGVDE. ATP is bound by residues 165 to 167, D240, 246 to 247, A263, and K267; these read DAK and RK. D240 is a binding site for L-methionine. Residue K271 participates in L-methionine binding.

This sequence belongs to the AdoMet synthase family. In terms of assembly, homotetramer; dimer of dimers. The cofactor is Mg(2+). It depends on K(+) as a cofactor.

It localises to the cytoplasm. The enzyme catalyses L-methionine + ATP + H2O = S-adenosyl-L-methionine + phosphate + diphosphate. It functions in the pathway amino-acid biosynthesis; S-adenosyl-L-methionine biosynthesis; S-adenosyl-L-methionine from L-methionine: step 1/1. Catalyzes the formation of S-adenosylmethionine (AdoMet) from methionine and ATP. The overall synthetic reaction is composed of two sequential steps, AdoMet formation and the subsequent tripolyphosphate hydrolysis which occurs prior to release of AdoMet from the enzyme. This chain is S-adenosylmethionine synthase, found in Saccharophagus degradans (strain 2-40 / ATCC 43961 / DSM 17024).